Consider the following 696-residue polypeptide: MKDDQLIDWIHERYEEQKSANRLAGRFRFLGLETKYSIISIISGIFIGLTAALLNALASLLNSFREGYCTVNILFDKQTCCSTLTEDYECQEFFFWRNNHSVFVSCLIYVSVSVGFAFIATTLGYVVAPAARASGIPTIKAILSGYKYPDMNVFFSIKTLCSKSLAVCFSVASGLWVGKEGPFVHIATNIIYLVERIAPSLADSEIFTRQLLAAAMASGIAASFNAPVGGVIFALEQLASSSFPSLFTGSIWYEFLCSASSVVALQLIRSWHTDVGYLSYVSLDRRWSYKDTLPFIFISILCGCLGSVLIYLNMKFASKTKGFSKISNVFFVIFLSLITSLTAYAILGESELLFNPMELFPQVINSCSPSSSTVLCETTFWVTAIVLFTSALLGLLLTSATFGAAIPTGIIVPSLAIGACIGRAVGTLLKSRFPSLAGTSIYGVIGSIAFLSSTTRLVVALVVILFELTGALNIALPLMLATLISKWVSDSIIETSIYDAWIQFRNIPYFPSSNSLKFSIPLNFPVRSPEQLVRLPIRSCSIEELERAMHDSSQSFFVVLKNDTEFFEGFISRNKVSELLNRRPMSSNMQTTDNTGLDPLRSASAPVDSTFDLFDYIHPTTFTLNYDTPPVLMLKLFKDAGITNLALLNHGKLHGVLTKIDIIEYAKKCKTHTGNTYSELPTGVTYETDIFNRADD.

10 helical membrane-spanning segments follow: residues 38-58 (IISIISGIFIGLTAALLNALA), 107-127 (LIYVSVSVGFAFIATTLGYVV), 215-235 (AMASGIAASFNAPVGGVIFAL), 245-265 (SLFTGSIWYEFLCSASSVVAL), 292-312 (TLPFIFISILCGCLGSVLIYL), 329-349 (VFFVIFLSLITSLTAYAILGE), 380-400 (FWVTAIVLFTSALLGLLLTSA), 402-422 (FGAAIPTGIIVPSLAIGACIG), 433-453 (FPSLAGTSIYGVIGSIAFLSS), and 457-477 (LVVALVVILFELTGALNIALP). CBS domains follow at residues 527-587 (RSPE…PMSS) and 617-674 (IHPT…THTG).

It belongs to the chloride channel (TC 2.A.49) family.

It is found in the membrane. Voltage-gated chloride channel. This is an uncharacterized protein from Schizosaccharomyces pombe (strain 972 / ATCC 24843) (Fission yeast).